The chain runs to 127 residues: Protein chibby homolog 1 (127 aa).

The segment covering 1 to 10 has biased composition (polar residues); that stretch reads MPLFGSTFSP. The tract at residues 1 to 26 is disordered; sequence MPLFGSTFSPKKTPPRKSASLSNLHN. Residues Ser-9 and Ser-20 each carry the phosphoserine modification. Residues 60–112 form a minimal region for the interaction with PKD2 region; that stretch reads IAETGISGGVDRREAQRLRRRNQQLEEENNLLRLKVDILLDMLSETTAESHLM. Residues 68 to 125 adopt a coiled-coil conformation; that stretch reads GVDRREAQRLRRRNQQLEEENNLLRLKVDILLDMLSETTAESHLMEKELDELKSVSRR. The tract at residues 77-98 is leucine-zipper; mediates homodimerization; sequence LRRRNQQLEEENNLLRLKVDIL.

This sequence belongs to the chibby family. Homodimer. Homodimerization is essential for nuclear localization and interaction with KPNA4 but is dispensable for interaction with CTNNB1. Interacts with polycystin-2/PKD2 and GM130. Interacts with the C-terminal region of CTNNB1. Interacts (C-terminus) with TCIM (C-terminus), TCIM competes with CTNNB1 for the interaction with CBY1. Interacts with FAM92A; this interaction facilitates targeting of FAM92A to cilium basal body. Interacts with CIBAR2. Interacts with KPNA4.

The protein localises to the nucleus speckle. Its subcellular location is the cytoplasm. The protein resides in the cytoskeleton. It is found in the cilium basal body. It localises to the microtubule organizing center. The protein localises to the centrosome. Its subcellular location is the centriole. The protein resides in the golgi apparatus. It is found in the trans-Golgi network. It localises to the cell projection. The protein localises to the cilium. Its subcellular location is the flagellum. The protein resides in the nucleus. In terms of biological role, inhibits the Wnt/Wingless pathway by binding to CTNNB1/beta-catenin and inhibiting beta-catenin-mediated transcriptional activation through competition with TCF/LEF transcription factors. Has also been shown to play a role in regulating the intracellular trafficking of polycystin-2/PKD2 and possibly of other intracellular proteins. Promotes adipocyte and cardiomyocyte differentiation. This Bos taurus (Bovine) protein is Protein chibby homolog 1 (CBY1).